A 407-amino-acid polypeptide reads, in one-letter code: Phosphopentomutase (407 aa).

Positions 10, 306, 311, 347, 348, and 359 each coordinate Mn(2+).

It belongs to the phosphopentomutase family. Mn(2+) serves as cofactor.

It localises to the cytoplasm. The catalysed reaction is 2-deoxy-alpha-D-ribose 1-phosphate = 2-deoxy-D-ribose 5-phosphate. It carries out the reaction alpha-D-ribose 1-phosphate = D-ribose 5-phosphate. Its pathway is carbohydrate degradation; 2-deoxy-D-ribose 1-phosphate degradation; D-glyceraldehyde 3-phosphate and acetaldehyde from 2-deoxy-alpha-D-ribose 1-phosphate: step 1/2. In terms of biological role, isomerase that catalyzes the conversion of deoxy-ribose 1-phosphate (dRib-1-P) and ribose 1-phosphate (Rib-1-P) to deoxy-ribose 5-phosphate (dRib-5-P) and ribose 5-phosphate (Rib-5-P), respectively. This chain is Phosphopentomutase, found in Pectobacterium atrosepticum (strain SCRI 1043 / ATCC BAA-672) (Erwinia carotovora subsp. atroseptica).